The following is a 571-amino-acid chain: Penicillin-binding protein activator LpoA (571 aa).

An N-terminal signal peptide occupies residues 1 to 26 (MMTILLQHTHLKNRLMPFLLALFLAG). A lipid anchor (N-palmitoyl cysteine) is attached at Cys27. A lipid anchor (S-diacylglycerol cysteine) is attached at Cys27.

This sequence belongs to the LpoA family. In terms of assembly, interacts with PBP1a.

The protein resides in the cell outer membrane. Regulator of peptidoglycan synthesis that is essential for the function of penicillin-binding protein 1A (PBP1a). This chain is Penicillin-binding protein activator LpoA, found in Pasteurella multocida (strain Pm70).